The following is a 760-amino-acid chain: MENNRNFPARQFHSLTFFAGLCIGITPVAQALAAEGQTNADDTLVVEASTPSLYAPQQSADPKFSRPVADTTRTMTVISEQVIKDQGATNLTDALKNVPGVGAFFAGENGNSTTGDAIYMRGADTSNSIYIDGIRDIGSVSRDTFNTEQVEVIKGPSGTDYGRSAPTGSINMISKQPRNDSGIDASASIGSAWFRRGTLDVNQVIGDTTAVRLNVMGEKTHDAGRDKVKNERYGVAPSIAFGLGTANRLYLNYLHVTQHNTPDGGIPTIGLPGYSAPSAGTATLNHSGKVDTHNFYGTDSDYDDSTTDTATMRFEHDINDNTTIRNTTRWSRVKQDYLMTAIMGGASNITQPTSDVNSWTWSRTANTKDVSNKILTNQTNLTSTFYTASIGHDVSTGVEFTRETQTNYGVNPVTLPAVNIYHPDSSIHPGGLTRNGANANGQTDTFAIYAFDTLQITRDFELNGGIRLDNYHTEYDSATACGGSGRGAITCPAGVAKGSPVTTVDTAKSGNLVNWKAGALYHLTENGNVYINYAVSQQPPGGNNFALAQSGSGNSANRTDFKPQKANTSEIGTKWQVLDKRLLLTAALFRTDIENEVEQNDDGTYSQYGKKRVEGYEISVAGNITPAWQVIGGYTQQKATIKNGKDVAQDGSSSLPYTPEHAFTLWSQYQATDDISVGAGARYIGSMHKGSDGAVGTPAFTEGYWVADAKLGYRVNRNLDFQLNVYNLFDTDYVASINKSGYRYHPGEPRTFLLTANMHF.

The N-terminal stretch at 1–31 (MENNRNFPARQFHSLTFFAGLCIGITPVAQA) is a signal peptide. In terms of domain architecture, TBDR plug spans 67-175 (PVADTTRTMT…PTGSINMISK (109 aa)). Residues 180–760 (DSGIDASASI…TFLLTANMHF (581 aa)) form the TBDR beta-barrel domain. The TonB C-terminal box motif lies at 743-760 (RYHPGEPRTFLLTANMHF).

It belongs to the TonB-dependent receptor family.

The protein resides in the cell outer membrane. Its function is as follows. Involved in the active transport across the outer membrane of iron complexed with catecholate siderophores such as dihydroxybenzoylserine and dihydroxybenzoate. It derives its energy for transport by interacting with the trans-periplasmic membrane protein TonB. Can also transport catechol-substituted cephalosporins. Receptor for microcins M, H47 and E492. The chain is Catecholate siderophore receptor Fiu (fiu) from Escherichia coli O157:H7.